A 184-amino-acid chain; its full sequence is Nucleoporin-62 C-terminal-like protein (184 aa).

Residues 117–151 (RILHGEVNKVKLDQKRLEQELDFILSQQQELEFLL) are a coiled coil.

The protein belongs to the nucleoporin NSP1/NUP62 family.

This chain is Nucleoporin-62 C-terminal-like protein (NUP62CL), found in Homo sapiens (Human).